Reading from the N-terminus, the 199-residue chain is ATP-dependent Clp protease proteolytic subunit 2 (199 aa).

Catalysis depends on Ser98, which acts as the Nucleophile. His123 is a catalytic residue.

Belongs to the peptidase S14 family. Fourteen ClpP subunits assemble into 2 heptameric rings which stack back to back to give a disk-like structure with a central cavity, resembling the structure of eukaryotic proteasomes.

Its subcellular location is the cytoplasm. The enzyme catalyses Hydrolysis of proteins to small peptides in the presence of ATP and magnesium. alpha-casein is the usual test substrate. In the absence of ATP, only oligopeptides shorter than five residues are hydrolyzed (such as succinyl-Leu-Tyr-|-NHMec, and Leu-Tyr-Leu-|-Tyr-Trp, in which cleavage of the -Tyr-|-Leu- and -Tyr-|-Trp bonds also occurs).. In terms of biological role, cleaves peptides in various proteins in a process that requires ATP hydrolysis. Has a chymotrypsin-like activity. Plays a major role in the degradation of misfolded proteins. The protein is ATP-dependent Clp protease proteolytic subunit 2 of Corynebacterium diphtheriae (strain ATCC 700971 / NCTC 13129 / Biotype gravis).